A 515-amino-acid chain; its full sequence is Bifunctional purine biosynthesis protein PurH (515 aa).

An MGS-like domain is found at 1 to 145; it reads MTKRALISVS…KNHASVTVVV (145 aa).

This sequence belongs to the PurH family.

The catalysed reaction is (6R)-10-formyltetrahydrofolate + 5-amino-1-(5-phospho-beta-D-ribosyl)imidazole-4-carboxamide = 5-formamido-1-(5-phospho-D-ribosyl)imidazole-4-carboxamide + (6S)-5,6,7,8-tetrahydrofolate. The enzyme catalyses IMP + H2O = 5-formamido-1-(5-phospho-D-ribosyl)imidazole-4-carboxamide. It functions in the pathway purine metabolism; IMP biosynthesis via de novo pathway; 5-formamido-1-(5-phospho-D-ribosyl)imidazole-4-carboxamide from 5-amino-1-(5-phospho-D-ribosyl)imidazole-4-carboxamide (10-formyl THF route): step 1/1. It participates in purine metabolism; IMP biosynthesis via de novo pathway; IMP from 5-formamido-1-(5-phospho-D-ribosyl)imidazole-4-carboxamide: step 1/1. This is Bifunctional purine biosynthesis protein PurH from Streptococcus equi subsp. zooepidemicus (strain H70).